The sequence spans 154 residues: 17.6 kDa class I heat shock protein (154 aa).

Residues 40 to 154 (ETSAFANTRI…PDVKSIEISG (115 aa)) enclose the sHSP domain.

This sequence belongs to the small heat shock protein (HSP20) family. Forms oligomeric structures.

Its subcellular location is the cytoplasm. In Solanum peruvianum (Peruvian tomato), this protein is 17.6 kDa class I heat shock protein.